The primary structure comprises 128 residues: Small ribosomal subunit protein uS11 (128 aa).

Belongs to the universal ribosomal protein uS11 family. In terms of assembly, part of the 30S ribosomal subunit. Interacts with proteins S7 and S18. Binds to IF-3.

In terms of biological role, located on the platform of the 30S subunit, it bridges several disparate RNA helices of the 16S rRNA. Forms part of the Shine-Dalgarno cleft in the 70S ribosome. The chain is Small ribosomal subunit protein uS11 from Desulforudis audaxviator (strain MP104C).